The sequence spans 387 residues: Eukaryotic translation initiation factor 3 subunit M (387 aa).

A PCI domain is found at 181-340 (LSSKVMIELL…RKVHISSTMH (160 aa)).

It belongs to the eIF-3 subunit M family. Component of the eukaryotic translation initiation factor 3 (eIF-3) complex. The eIF-3 complex interacts with pix.

It is found in the cytoplasm. The protein resides in the golgi apparatus. In terms of biological role, component of the eukaryotic translation initiation factor 3 (eIF-3) complex, which is involved in protein synthesis of a specialized repertoire of mRNAs and, together with other initiation factors, stimulates binding of mRNA and methionyl-tRNAi to the 40S ribosome. The eIF-3 complex specifically targets and initiates translation of a subset of mRNAs involved in cell proliferation. In Drosophila grimshawi (Hawaiian fruit fly), this protein is Eukaryotic translation initiation factor 3 subunit M.